The primary structure comprises 383 residues: NifS-like protein (383 aa).

Residues 58–59 and 184–186 each bind pyridoxal 5'-phosphate; these read SE and SLN.

This sequence belongs to the class-V pyridoxal-phosphate-dependent aminotransferase family. NifS/IscS subfamily. Pyridoxal 5'-phosphate is required as a cofactor.

The protein localises to the virion. This chain is NifS-like protein, found in African swine fever virus (isolate Pig/Kenya/KEN-50/1950) (ASFV).